Consider the following 997-residue polypeptide: Protein HIR2 (997 aa).

5 WD repeats span residues 10–48, 117–152, 153–194, 274–319, and 323–362; these read GISG…DTAF, VSQS…TRSA, NKKE…VVYH, VHSP…PLFA, and ISDS…LGKT. Positions 408–584 are disordered; the sequence is ADNSSNILST…RKPKEDALGN (177 aa). Positions 409–446 are enriched in polar residues; the sequence is DNSSNILSTDTNTNEKNLSTVNTTEPQTNSQSSSYNNK. Positions 464–480 are enriched in basic and acidic residues; it reads SDEKAKNLEARPIEAKS. Residues 491 to 501 show a composition bias toward polar residues; that stretch reads SKSSSVTTSDN. Basic and acidic residues predominate over residues 518–538; sequence TEKKTKPDKKSIKSENGESKV. Over residues 539–567 the composition is skewed to polar residues; the sequence is NKAQNTISPKESNTTDNKSTTPDFKNPSY. WD repeat units follow at residues 665-706 and 708-745; these read LFQD…IIPP and TIGV…LEFP.

This sequence belongs to the WD repeat HIR1 family.

Its subcellular location is the nucleus. Required for replication-independent chromatin assembly and for the periodic repression of histone gene transcription during the cell cycle. In Candida glabrata (strain ATCC 2001 / BCRC 20586 / JCM 3761 / NBRC 0622 / NRRL Y-65 / CBS 138) (Yeast), this protein is Protein HIR2 (HIR2).